A 439-amino-acid polypeptide reads, in one-letter code: GTPase Obg (439 aa).

Positions 5-164 (TDFFDQATIV…LTLELELKML (160 aa)) constitute an Obg domain. The 171-residue stretch at 165 to 335 (ADVGLVGFPN…LLQRVAELLR (171 aa)) folds into the OBG-type G domain. GTP is bound by residues 171-178 (GFPNAGKS), 196-200 (FTTLT), 217-220 (DIPG), 287-290 (NKAD), and 316-318 (SAA). Residues S178 and T198 each coordinate Mg(2+). Residues 337-359 (DPPPQRDPVDPDEPPLEWPLPPV) form a disordered region. The OCT domain occupies 356–433 (LPPVDENAFT…IGRAELVWDD (78 aa)).

This sequence belongs to the TRAFAC class OBG-HflX-like GTPase superfamily. OBG GTPase family. Monomer. Mg(2+) serves as cofactor.

It is found in the cytoplasm. Its function is as follows. An essential GTPase which binds GTP, GDP and possibly (p)ppGpp with moderate affinity, with high nucleotide exchange rates and a fairly low GTP hydrolysis rate. Plays a role in control of the cell cycle, stress response, ribosome biogenesis and in those bacteria that undergo differentiation, in morphogenesis control. In Chloroflexus aggregans (strain MD-66 / DSM 9485), this protein is GTPase Obg.